The chain runs to 280 residues: MTAALPDLSFHPAWHAQLELAYARAGDATRPVTRRHAGPLRVQKHLYAEGPEVCQHILVHPPGGIAGGDSLAFDVRLGERAWAQLTSPGAAKWYRAACPSRQTLEIHLEPGATLEWLPQESIVFAGAQAELETRIQLRGDARLFYWDMVALGRPASGERFASGHFVAALDIRRDDRLLWHERQRIDGGDRLLDSPIGLAGHPVLATLVASGEIDTDLLQRCRALPCAGRGNLSQLPGGLLVARCLADEALHARAWLIELWRLLRPALLGREAVPPRIWST.

It belongs to the UreD family. UreD, UreF and UreG form a complex that acts as a GTP-hydrolysis-dependent molecular chaperone, activating the urease apoprotein by helping to assemble the nickel containing metallocenter of UreC. The UreE protein probably delivers the nickel.

The protein localises to the cytoplasm. Functionally, required for maturation of urease via the functional incorporation of the urease nickel metallocenter. This is Urease accessory protein UreD from Pseudomonas aeruginosa (strain UCBPP-PA14).